The sequence spans 132 residues: Small ribosomal subunit protein uS9 (132 aa).

The protein belongs to the universal ribosomal protein uS9 family.

The chain is Small ribosomal subunit protein uS9 from Mesomycoplasma hyopneumoniae (strain 232) (Mycoplasma hyopneumoniae).